The sequence spans 51 residues: Large ribosomal subunit protein bL33 (51 aa).

Belongs to the bacterial ribosomal protein bL33 family.

This is Large ribosomal subunit protein bL33 from Ruthia magnifica subsp. Calyptogena magnifica.